The sequence spans 432 residues: MSATESCAKNVQYRVDHLLSAVENELQAGSEKGDPTEKELKVSLEERDLWTRFKELTNEMIVTKNGRRMFPVLKVSMSGLDPNAMYTVLLDFVAADNHRWKYVNGEWVPGGKPEPQAPSCVYIHPDSPNFGAHWMKDPVSFSKVKLTNKMNGGGQIMLNSLHKYEPRIHIVRVGGTQRMITSHSFPETQFIAVTAYQNEEITALKIKHNPFAKAFLDAKERNDYKDILDEGIDSQHSNFSQLGTWLIPNGGSLCSPNPHTQFGAPLSLSSPHGCERYSSLRNHRSAPYPSPYTHRNNSPNNLADNSSACLSMLQSHDNWSTLQMPAHTGMLPMSHSTGTPPPSSQYPSLWSVSNSAITPVSQSGGITNGISSQYLLGSTPHYSSLSHAVPSPSTGSPLYEHGAQTEIAENQYDVTAHSRLSSTWTPVAPPSV.

A DNA-binding region (T-box) is located at residues Leu-49–Asp-217. The segment at Cys-274–Ser-306 is disordered. A compositionally biased stretch (polar residues) spans Thr-293–Ser-306.

As to quaternary structure, when not bound to DNA, exists as a monomer. Binds DNA as a dimer. In terms of tissue distribution, expressed in presumptive mesodermal cells around the blastopore, and then in the notochord.

It localises to the nucleus. Functionally, involved in the transcriptional regulation of genes required for mesoderm formation and differentiation. Binds to the palindromic T site 5'-TTCACACCTAGGTGTGAA-3' DNA sequence. Causes dorsal mesodermal differentiation of animal cap ectoderm when co-expressed with wnt8 and noggin. None of these molecules causes dorsal mesoderm formation when expressed alone. Establishes the left/right axis at early gastrula stage by directly up-regulating mesodermal expression of zic3. The sequence is that of T-box transcription factor T from Xenopus laevis (African clawed frog).